Here is a 178-residue protein sequence, read N- to C-terminus: Extracellular fatty acid-binding protein (178 aa).

An N-terminal signal peptide occupies residues methionine 1–alanine 20. A Blocked amino end (Ala) modification is found at alanine 21. Threonine 43 provides a ligand contact to enterobactin. Residues tyrosine 72 and lysine 104 each contribute to the 1-tetradecanoyl-sn-glycerol 3-phosphate site. A disulfide bond links cysteine 80 and cysteine 173. Enterobactin-binding residues include lysine 104, arginine 123, and arginine 134. Arginine 134 to tyrosine 136 contacts 1-tetradecanoyl-sn-glycerol 3-phosphate.

This sequence belongs to the calycin superfamily. Lipocalin family. As to quaternary structure, monomer. Does not seem to be glycosylated. Expressed in egg white (at protein level). Expressed in the magnum of the oviduct (at protein level). Preferentially synthesized in nonproliferating cells.

It is found in the secreted. Functionally, siderocalin-like lipocalin tightly binding a variety of bacterial ferric siderophores, also binds long-chain unsaturated fatty acids such as linoleic acid, oleic acid, arachidonic acid and, with a lower affinity, long chain saturated fatty acids such as steraic acid. May act as an antibacterial factor, through dual ligand specificity, both as a siderophore-sequestrating molecule and a lysophosphatidic acid (LPA) sensor. In Gallus gallus (Chicken), this protein is Extracellular fatty acid-binding protein (EXFABP).